The sequence spans 297 residues: Urease accessory protein UreD (297 aa).

Belongs to the UreD family. UreD, UreF and UreG form a complex that acts as a GTP-hydrolysis-dependent molecular chaperone, activating the urease apoprotein by helping to assemble the nickel containing metallocenter of UreC. The UreE protein probably delivers the nickel.

The protein resides in the cytoplasm. In terms of biological role, required for maturation of urease via the functional incorporation of the urease nickel metallocenter. This Anaeromyxobacter sp. (strain Fw109-5) protein is Urease accessory protein UreD.